A 286-amino-acid polypeptide reads, in one-letter code: Bifunctional protein FolD (286 aa).

Residues Gly-170–Ser-172 and Ile-236 each bind NADP(+).

Belongs to the tetrahydrofolate dehydrogenase/cyclohydrolase family. As to quaternary structure, homodimer.

It catalyses the reaction (6R)-5,10-methylene-5,6,7,8-tetrahydrofolate + NADP(+) = (6R)-5,10-methenyltetrahydrofolate + NADPH. The catalysed reaction is (6R)-5,10-methenyltetrahydrofolate + H2O = (6R)-10-formyltetrahydrofolate + H(+). It participates in one-carbon metabolism; tetrahydrofolate interconversion. Its function is as follows. Catalyzes the oxidation of 5,10-methylenetetrahydrofolate to 5,10-methenyltetrahydrofolate and then the hydrolysis of 5,10-methenyltetrahydrofolate to 10-formyltetrahydrofolate. In Methanococcoides burtonii (strain DSM 6242 / NBRC 107633 / OCM 468 / ACE-M), this protein is Bifunctional protein FolD.